A 151-amino-acid chain; its full sequence is Testis-expressed protein 29 (151 aa).

Topologically, residues 1-56 are extracellular; sequence MEYVLEVKNSPRHLLKQFTVCDVPLYDICDYNVSRDRCQELGCCFYEGVCYKKAVP. Residues 57–77 traverse the membrane as a helical segment; it reads IYIHVFSALIVIIAGAFVITI. Residues 78-151 lie on the Cytoplasmic side of the membrane; it reads IYRVIQESRK…TITEAEETED (74 aa). Residues 100–151 are disordered; that stretch reads KSSEKAELASSSSKLGLKPASPGPPSAGPSMKSDEDKDDVTGTITEAEETED. Over residues 107–119 the composition is skewed to low complexity; sequence LASSSSKLGLKPA.

The protein localises to the membrane. The polypeptide is Testis-expressed protein 29 (TEX29) (Homo sapiens (Human)).